A 545-amino-acid polypeptide reads, in one-letter code: CTP synthase (545 aa).

The amidoligase domain stretch occupies residues 1–266 (MTTNYIFVTG…DDYICKRFSL (266 aa)). S14 contributes to the CTP binding site. UTP is bound at residue S14. Residues 15 to 20 (SLGKGI) and D72 each bind ATP. The Mg(2+) site is built by D72 and E140. CTP-binding positions include 147–149 (DIE), 187–192 (KTKPTQ), and K223. UTP-binding positions include 187–192 (KTKPTQ) and K223. 239 to 241 (KDV) contacts ATP. Residues 291–542 (TIGMVGKYIE…VKAASEYQKR (252 aa)) enclose the Glutamine amidotransferase type-1 domain. G352 contacts L-glutamine. C379 acts as the Nucleophile; for glutamine hydrolysis in catalysis. L-glutamine is bound by residues 380-383 (LGMQ), E403, and R470. Residues H515 and E517 contribute to the active site.

It belongs to the CTP synthase family. As to quaternary structure, homotetramer.

The catalysed reaction is UTP + L-glutamine + ATP + H2O = CTP + L-glutamate + ADP + phosphate + 2 H(+). The enzyme catalyses L-glutamine + H2O = L-glutamate + NH4(+). It carries out the reaction UTP + NH4(+) + ATP = CTP + ADP + phosphate + 2 H(+). The protein operates within pyrimidine metabolism; CTP biosynthesis via de novo pathway; CTP from UDP: step 2/2. With respect to regulation, allosterically activated by GTP, when glutamine is the substrate; GTP has no effect on the reaction when ammonia is the substrate. The allosteric effector GTP functions by stabilizing the protein conformation that binds the tetrahedral intermediate(s) formed during glutamine hydrolysis. Inhibited by the product CTP, via allosteric rather than competitive inhibition. Its function is as follows. Catalyzes the ATP-dependent amination of UTP to CTP with either L-glutamine or ammonia as the source of nitrogen. Regulates intracellular CTP levels through interactions with the four ribonucleotide triphosphates. The sequence is that of CTP synthase from Enterobacter sp. (strain 638).